The primary structure comprises 144 residues: Large ribosomal subunit protein uL16 (144 aa).

This sequence belongs to the universal ribosomal protein uL16 family. As to quaternary structure, part of the 50S ribosomal subunit.

Its function is as follows. Binds 23S rRNA and is also seen to make contacts with the A and possibly P site tRNAs. The polypeptide is Large ribosomal subunit protein uL16 (Heliobacterium modesticaldum (strain ATCC 51547 / Ice1)).